Consider the following 418-residue polypeptide: Enolase (418 aa).

Glutamine 162 is a binding site for (2R)-2-phosphoglycerate. The active-site Proton donor is glutamate 204. Mg(2+) is bound by residues aspartate 241, glutamate 283, and aspartate 309. 4 residues coordinate (2R)-2-phosphoglycerate: lysine 334, arginine 363, serine 364, and lysine 385. The active-site Proton acceptor is lysine 334.

Belongs to the enolase family. Mg(2+) is required as a cofactor.

It is found in the cytoplasm. Its subcellular location is the secreted. The protein localises to the cell surface. The catalysed reaction is (2R)-2-phosphoglycerate = phosphoenolpyruvate + H2O. The protein operates within carbohydrate degradation; glycolysis; pyruvate from D-glyceraldehyde 3-phosphate: step 4/5. Its function is as follows. Catalyzes the reversible conversion of 2-phosphoglycerate (2-PG) into phosphoenolpyruvate (PEP). It is essential for the degradation of carbohydrates via glycolysis. This is Enolase from Pelagibacter ubique (strain HTCC1062).